The following is a 308-amino-acid chain: Glycerol-3-phosphate dehydrogenase [NAD(P)+] (308 aa).

NADPH is bound by residues W15, R35, R36, and K83. Sn-glycerol 3-phosphate-binding residues include K83 and G111. NADPH is bound at residue S115. 5 residues coordinate sn-glycerol 3-phosphate: K166, D219, S229, R230, and N231. K166 functions as the Proton acceptor in the catalytic mechanism. An NADPH-binding site is contributed by R230. NADPH is bound at residue E256.

This sequence belongs to the NAD-dependent glycerol-3-phosphate dehydrogenase family.

The protein resides in the cytoplasm. The catalysed reaction is sn-glycerol 3-phosphate + NAD(+) = dihydroxyacetone phosphate + NADH + H(+). It carries out the reaction sn-glycerol 3-phosphate + NADP(+) = dihydroxyacetone phosphate + NADPH + H(+). It functions in the pathway membrane lipid metabolism; glycerophospholipid metabolism. Functionally, catalyzes the reduction of the glycolytic intermediate dihydroxyacetone phosphate (DHAP) to sn-glycerol 3-phosphate (G3P), the key precursor for phospholipid synthesis. In Synechococcus elongatus (strain ATCC 33912 / PCC 7942 / FACHB-805) (Anacystis nidulans R2), this protein is Glycerol-3-phosphate dehydrogenase [NAD(P)+].